The primary structure comprises 200 residues: Ribonuclease HII (200 aa).

Residues 11 to 200 enclose the RNase H type-2 domain; that stretch reads QSIAGVDEVG…VRRALISLTG (190 aa). A divalent metal cation contacts are provided by Asp17, Glu18, and Asp109.

Belongs to the RNase HII family. Requires Mn(2+) as cofactor. Mg(2+) is required as a cofactor.

The protein localises to the cytoplasm. It carries out the reaction Endonucleolytic cleavage to 5'-phosphomonoester.. Its function is as follows. Endonuclease that specifically degrades the RNA of RNA-DNA hybrids. The sequence is that of Ribonuclease HII from Hamiltonella defensa subsp. Acyrthosiphon pisum (strain 5AT).